A 100-amino-acid chain; its full sequence is Aspartyl/glutamyl-tRNA(Asn/Gln) amidotransferase subunit C (100 aa).

Belongs to the GatC family. In terms of assembly, heterotrimer of A, B and C subunits.

The catalysed reaction is L-glutamyl-tRNA(Gln) + L-glutamine + ATP + H2O = L-glutaminyl-tRNA(Gln) + L-glutamate + ADP + phosphate + H(+). The enzyme catalyses L-aspartyl-tRNA(Asn) + L-glutamine + ATP + H2O = L-asparaginyl-tRNA(Asn) + L-glutamate + ADP + phosphate + 2 H(+). Allows the formation of correctly charged Asn-tRNA(Asn) or Gln-tRNA(Gln) through the transamidation of misacylated Asp-tRNA(Asn) or Glu-tRNA(Gln) in organisms which lack either or both of asparaginyl-tRNA or glutaminyl-tRNA synthetases. The reaction takes place in the presence of glutamine and ATP through an activated phospho-Asp-tRNA(Asn) or phospho-Glu-tRNA(Gln). The protein is Aspartyl/glutamyl-tRNA(Asn/Gln) amidotransferase subunit C of Streptococcus equi subsp. equi (strain 4047).